Here is a 102-residue protein sequence, read N- to C-terminus: Small ribosomal subunit protein uS10 (102 aa).

Belongs to the universal ribosomal protein uS10 family. In terms of assembly, part of the 30S ribosomal subunit.

Functionally, involved in the binding of tRNA to the ribosomes. The protein is Small ribosomal subunit protein uS10 of Lacticaseibacillus casei (strain BL23) (Lactobacillus casei).